The primary structure comprises 165 residues: Aspartate carbamoyltransferase regulatory chain (165 aa).

Zn(2+) contacts are provided by Cys121, Cys126, Cys149, and Cys152.

It belongs to the PyrI family. In terms of assembly, contains catalytic and regulatory chains. The cofactor is Zn(2+).

Functionally, involved in allosteric regulation of aspartate carbamoyltransferase. The chain is Aspartate carbamoyltransferase regulatory chain from Methanoregula boonei (strain DSM 21154 / JCM 14090 / 6A8).